Here is a 227-residue protein sequence, read N- to C-terminus: Ribose-5-phosphate isomerase A (227 aa).

Residues 26 to 29 (TGST), 82 to 85 (DGAD), and 95 to 98 (KGGG) contribute to the substrate site. Residue glutamate 104 is the Proton acceptor of the active site. Lysine 122 serves as a coordination point for substrate.

The protein belongs to the ribose 5-phosphate isomerase family. As to quaternary structure, homodimer.

The enzyme catalyses aldehydo-D-ribose 5-phosphate = D-ribulose 5-phosphate. It participates in carbohydrate degradation; pentose phosphate pathway; D-ribose 5-phosphate from D-ribulose 5-phosphate (non-oxidative stage): step 1/1. Catalyzes the reversible conversion of ribose-5-phosphate to ribulose 5-phosphate. The sequence is that of Ribose-5-phosphate isomerase A from Streptococcus equi subsp. equi (strain 4047).